A 294-amino-acid polypeptide reads, in one-letter code: Large ribosomal subunit protein uL18B (294 aa).

This sequence belongs to the universal ribosomal protein uL18 family. Component of the large ribosomal subunit (LSU). Mature yeast ribosomes consist of a small (40S) and a large (60S) subunit. The 40S small subunit contains 1 molecule of ribosomal RNA (18S rRNA) and 33 different proteins (encoded by 57 genes). The large 60S subunit contains 3 rRNA molecules (25S, 5.8S and 5S rRNA) and 46 different proteins (encoded by 81 genes). Component of a hexameric 5S RNP precursor complex, composed of 5S RNA, rrs1, rpf2, rpl5a/rpl5b, rpl11a/rpl11b and syo1; this complex acts as a precursor for ribosome assembly. rpl5a/rpl5b/uL18 forms a heterotrimeric complex with syo1 and rpl11a/rpl11b/uL5. Interaction of this complex with KAP104 allows the nuclear import of the heterotrimer.

The protein resides in the cytoplasm. The protein localises to the nucleus. Functionally, component of the ribosome, a large ribonucleoprotein complex responsible for the synthesis of proteins in the cell. The small ribosomal subunit (SSU) binds messenger RNAs (mRNAs) and translates the encoded message by selecting cognate aminoacyl-transfer RNA (tRNA) molecules. The large subunit (LSU) contains the ribosomal catalytic site termed the peptidyl transferase center (PTC), which catalyzes the formation of peptide bonds, thereby polymerizing the amino acids delivered by tRNAs into a polypeptide chain. The nascent polypeptides leave the ribosome through a tunnel in the LSU and interact with protein factors that function in enzymatic processing, targeting, and the membrane insertion of nascent chains at the exit of the ribosomal tunnel. The polypeptide is Large ribosomal subunit protein uL18B (rpl502) (Schizosaccharomyces pombe (strain 972 / ATCC 24843) (Fission yeast)).